The sequence spans 222 residues: Glutathione S-transferase A1 (222 aa).

Met-1 is subject to N-acetylmethionine. Ala-2 is modified (N-acetylalanine; in Glutathione S-transferase A1, N-terminally processed). The 81-residue stretch at 3–83 folds into the GST N-terminal domain; sequence EKPKLHYFNA…YIASKYNLYG (81 aa). The residue at position 4 (Lys-4) is an N6-succinyllysine. Residues Tyr-9, Arg-45, 54-55, and 67-68 contribute to the glutathione site; these read QV and QT. Residues 85-207 form the GST C-terminal domain; it reads DIKERALIDM…LQPGSPRKPP (123 aa).

This sequence belongs to the GST superfamily. Alpha family. Homodimer or heterodimer of GSTA1 and GSTA2. In terms of tissue distribution, liver.

It localises to the cytoplasm. The enzyme catalyses RX + glutathione = an S-substituted glutathione + a halide anion + H(+). It carries out the reaction prostaglandin A2 + glutathione = prostaglandin A2-S-(R)-glutathione. It catalyses the reaction prostaglandin J2 + glutathione = prostaglandin J2-S-(R)-glutathione. The catalysed reaction is (13S)-hydroperoxy-(9Z,11E)-octadecadienoate + 2 glutathione = (13S)-hydroxy-(9Z,11E)-octadecadienoate + glutathione disulfide + H2O. The enzyme catalyses androst-5-ene-3,17-dione = androst-4-ene-3,17-dione. With respect to regulation, the isomerase activity is inhibited by S-methylglutathione (GSMe). Functionally, glutathione S-transferase that catalyzes the nucleophilic attack of the sulfur atom of glutathione on the electrophilic groups of a wide range of exogenous and endogenous compounds. Involved in the formation of glutathione conjugates of both prostaglandin A2 (PGA2) and prostaglandin J2 (PGJ2). It also catalyzes the isomerization of D5-androstene-3,17-dione (AD) into D4-androstene-3,17-dione and may therefore play an important role in hormone biosynthesis. Through its glutathione-dependent peroxidase activity toward the fatty acid hydroperoxide (13S)-hydroperoxy-(9Z,11E)-octadecadienoate/13-HPODE it is also involved in the metabolism of oxidized linoleic acid. The chain is Glutathione S-transferase A1 (GSTA1) from Homo sapiens (Human).